The following is a 3102-amino-acid chain: Laminin subunit alpha lam-3 (3102 aa).

The signal sequence occupies residues 1 to 16 (MRLWLGLLAVSNIALG). 3 N-linked (GlcNAc...) asparagine glycosylation sites follow: Asn19, Asn135, and Asn237. The Laminin N-terminal domain maps to 44–295 (SERGLFPNIF…SISDISIGGQ (252 aa)). Cystine bridges form between Cys296/Cys305, Cys298/Cys316, Cys318/Cys327, Cys330/Cys350, Cys353/Cys362, Cys355/Cys387, Cys390/Cys399, Cys402/Cys420, Cys423/Cys435, Cys425/Cys451, Cys453/Cys462, Cys465/Cys475, Cys478/Cys491, Cys480/Cys496, Cys498/Cys507, and Cys510/Cys525. Laminin EGF-like domains lie at 296 to 352 (CICY…VCQQ), 353 to 422 (CQCF…ACRT), 423 to 477 (CECD…TCEP), and 478 to 527 (CPCN…GCQP). In terms of domain architecture, Laminin IV type A 1 spans 548–740 (INNIGWHLTD…QDTLMGGVEV (193 aa)). 31 cysteine pairs are disulfide-bonded: Cys774–Cys783, Cys776–Cys790, Cys793–Cys802, Cys805–Cys822, Cys825–Cys838, Cys827–Cys858, Cys861–Cys870, Cys873–Cys886, Cys889–Cys903, Cys891–Cys910, Cys913–Cys922, Cys925–Cys938, Cys941–Cys953, Cys943–Cys960, Cys962–Cys971, Cys974–Cys985, Cys988–Cys1000, Cys990–Cys1007, Cys1009–Cys1018, Cys1021–Cys1033, Cys1036–Cys1049, Cys1038–Cys1056, Cys1058–Cys1067, Cys1070–Cys1083, Cys1086–Cys1098, Cys1088–Cys1105, Cys1107–Cys1116, Cys1119–Cys1131, Cys1134–Cys1144, Cys1137–Cys1151, and Cys1153–Cys1162. Laminin EGF-like domains are found at residues 774 to 824 (CDCH…ACEQ), 825 to 888 (CECP…KCIE), 889 to 940 (CTCN…TCKP), 941 to 987 (CGCH…GCPA), 988 to 1035 (CDCN…GCQF), 1036 to 1085 (CHCN…GCED), 1086 to 1133 (CGCD…GCTE), 1134 to 1180 (CEPC…GCKL), 1181 to 1226 (CDCS…TCEP), and 1227 to 1283 (CGCN…GCTE). The N-linked (GlcNAc...) asparagine glycan is linked to Asn796. The N-linked (GlcNAc...) asparagine glycan is linked to Asn991. Asn1027 carries N-linked (GlcNAc...) asparagine glycosylation. A glycan (N-linked (GlcNAc...) asparagine) is linked at Asn1076. The N-linked (GlcNAc...) asparagine glycan is linked to Asn1164. Cystine bridges form between Cys1165–Cys1178, Cys1181–Cys1193, Cys1183–Cys1200, Cys1202–Cys1211, Cys1214–Cys1224, Cys1227–Cys1246, Cys1229–Cys1252, Cys1254–Cys1263, and Cys1266–Cys1281. Asn1288 carries an N-linked (GlcNAc...) asparagine glycan. A Laminin IV type A 2 domain is found at 1295–1496 (QSDLVWQQMY…STTKAIGVEK (202 aa)). Cystine bridges form between Cys1540/Cys1549, Cys1542/Cys1556, Cys1559/Cys1568, Cys1571/Cys1587, Cys1590/Cys1603, Cys1592/Cys1614, Cys1617/Cys1626, Cys1629/Cys1644, Cys1647/Cys1659, Cys1649/Cys1666, Cys1668/Cys1677, and Cys1680/Cys1691. Laminin EGF-like domains lie at 1540–1589 (CSCH…ACTK), 1590–1646 (CACP…TCSP), and 1647–1693 (CDCH…VCTS). Residues Asn1717, Asn1734, Asn1777, Asn1806, Asn1839, Asn1875, Asn1969, Asn1984, and Asn2048 are each glycosylated (N-linked (GlcNAc...) asparagine). Residues 2061–2084 (EAVSKMLGSEGSESGDANEESLRS) are disordered. Residues Asn2091, Asn2193, Asn2369, and Asn2479 are each glycosylated (N-linked (GlcNAc...) asparagine). 3 consecutive Laminin G-like domains span residues 2467–2644 (SQRG…TDGC), 2652–2839 (DKII…IGMC), and 2913–3088 (RYGL…AKAC). An intrachain disulfide couples Cys2617 to Cys2644. 2 N-linked (GlcNAc...) asparagine glycosylation sites follow: Asn2672 and Asn2686. Cys2814 and Cys2839 are disulfide-bonded. Asn2932, Asn2959, and Asn3007 each carry an N-linked (GlcNAc...) asparagine glycan. Cysteines 3058 and 3088 form a disulfide.

In terms of assembly, laminin is a complex glycoprotein, consisting of three different polypeptide chains (alpha, beta, gamma), which are bound to each other by disulfide bonds into a cross-shaped molecule comprising one long and three short arms with globules at each end.

The protein localises to the secreted. It is found in the extracellular space. Its subcellular location is the extracellular matrix. It localises to the basement membrane. Binding to cells via a high affinity receptor, laminin is thought to mediate the attachment, migration and organization of cells into tissues during embryonic development by interacting with other extracellular matrix components. Required to assemble a stable basement membrane and for organizing receptor complexes and cytoskeletal components to the proper cell surfaces. During embryogenesis, does not require the presence of collagen type IV in order to associate with cell surfaces, prior to assembly of the prototypical basement membrane. Plays an important role in muscle contraction of the body. Probably plays a distinct role from the related laminin subunit alpha epi-1. This is Laminin subunit alpha lam-3 from Caenorhabditis elegans.